The primary structure comprises 427 residues: Serine--tRNA ligase (427 aa).

231 to 233 (TAE) is an L-serine binding site. ATP is bound at residue 262 to 264 (RSE). Glu-285 is an L-serine binding site. Position 349-352 (349-352 (EISS)) interacts with ATP. Ser-385 lines the L-serine pocket.

Belongs to the class-II aminoacyl-tRNA synthetase family. Type-1 seryl-tRNA synthetase subfamily. Homodimer. The tRNA molecule binds across the dimer.

It localises to the cytoplasm. The catalysed reaction is tRNA(Ser) + L-serine + ATP = L-seryl-tRNA(Ser) + AMP + diphosphate + H(+). It catalyses the reaction tRNA(Sec) + L-serine + ATP = L-seryl-tRNA(Sec) + AMP + diphosphate + H(+). Its pathway is aminoacyl-tRNA biosynthesis; selenocysteinyl-tRNA(Sec) biosynthesis; L-seryl-tRNA(Sec) from L-serine and tRNA(Sec): step 1/1. In terms of biological role, catalyzes the attachment of serine to tRNA(Ser). Is also able to aminoacylate tRNA(Sec) with serine, to form the misacylated tRNA L-seryl-tRNA(Sec), which will be further converted into selenocysteinyl-tRNA(Sec). This chain is Serine--tRNA ligase, found in Listeria innocua serovar 6a (strain ATCC BAA-680 / CLIP 11262).